Reading from the N-terminus, the 102-residue chain is Aspartyl/glutamyl-tRNA(Asn/Gln) amidotransferase subunit C (102 aa).

This sequence belongs to the GatC family. Heterotrimer of A, B and C subunits.

The enzyme catalyses L-glutamyl-tRNA(Gln) + L-glutamine + ATP + H2O = L-glutaminyl-tRNA(Gln) + L-glutamate + ADP + phosphate + H(+). It carries out the reaction L-aspartyl-tRNA(Asn) + L-glutamine + ATP + H2O = L-asparaginyl-tRNA(Asn) + L-glutamate + ADP + phosphate + 2 H(+). Its function is as follows. Allows the formation of correctly charged Asn-tRNA(Asn) or Gln-tRNA(Gln) through the transamidation of misacylated Asp-tRNA(Asn) or Glu-tRNA(Gln) in organisms which lack either or both of asparaginyl-tRNA or glutaminyl-tRNA synthetases. The reaction takes place in the presence of glutamine and ATP through an activated phospho-Asp-tRNA(Asn) or phospho-Glu-tRNA(Gln). In Bordetella petrii (strain ATCC BAA-461 / DSM 12804 / CCUG 43448), this protein is Aspartyl/glutamyl-tRNA(Asn/Gln) amidotransferase subunit C.